The primary structure comprises 131 residues: Ribosome-binding factor A (131 aa).

Belongs to the RbfA family. Monomer. Binds 30S ribosomal subunits, but not 50S ribosomal subunits or 70S ribosomes.

Its subcellular location is the cytoplasm. Functionally, one of several proteins that assist in the late maturation steps of the functional core of the 30S ribosomal subunit. Associates with free 30S ribosomal subunits (but not with 30S subunits that are part of 70S ribosomes or polysomes). Required for efficient processing of 16S rRNA. May interact with the 5'-terminal helix region of 16S rRNA. In Ruegeria pomeroyi (strain ATCC 700808 / DSM 15171 / DSS-3) (Silicibacter pomeroyi), this protein is Ribosome-binding factor A.